The sequence spans 186 residues: Secreted chorismate mutase (186 aa).

The signal sequence occupies residues 1 to 30 (MQPTHTLTRLTVIGKLIIASSFFLSLAVQA). Residues 31–107 (QQCGQTAPLI…AAKAIQYRYR (77 aa)) enclose the Chorismate mutase domain. Cys-33 and Cys-148 are disulfide-bonded. Substrate contacts are provided by residues Arg-43, Lys-54, Asp-63, 99-103 (AKAIQ), and Arg-127.

In terms of assembly, homodimer.

The protein resides in the periplasm. It catalyses the reaction chorismate = prephenate. It functions in the pathway metabolic intermediate biosynthesis; prephenate biosynthesis; prephenate from chorismate: step 1/1. Its function is as follows. Catalyzes the Claisen rearrangement of chorismate to prephenate. May play some role in the pathogenicity. In Yersinia pestis, this protein is Secreted chorismate mutase (pheA2).